The primary structure comprises 294 residues: MLGDLFTKPKKRKYATIPSDGTKADVPEGIMTKCPECKKIMYTKELQKNLMVCNYCGFHHPIGAKARIDMLVDEGSFEEIDANLTTANPLGFEDYMDRIEKDKQKSGLNEAILTGHATIGGNPLVIAVMDSRFRMASMGSVVGEKILRAVEDADKTNKPFVIFTASGGARMQEGMLSLMQMAKTSAAFKRFSNHGGLVITVMTHPTTGGVSASFASLGDYNFAEPGALIGFAGRRVIEQTVREELPEDFQTAEFLLKHGQLDDCISRLDLQNKLSFILSIHVKTPEVGGEADGE.

The CoA carboxyltransferase N-terminal domain maps to 30 to 294; that stretch reads IMTKCPECKK…PEVGGEADGE (265 aa). 4 residues coordinate Zn(2+): C34, C37, C53, and C56. The C4-type zinc finger occupies 34–56; sequence CPECKKIMYTKELQKNLMVCNYC.

The protein belongs to the AccD/PCCB family. Acetyl-CoA carboxylase is a heterohexamer composed of biotin carboxyl carrier protein (AccB), biotin carboxylase (AccC) and two subunits each of ACCase subunit alpha (AccA) and ACCase subunit beta (AccD). Zn(2+) is required as a cofactor.

The protein resides in the cytoplasm. The enzyme catalyses N(6)-carboxybiotinyl-L-lysyl-[protein] + acetyl-CoA = N(6)-biotinyl-L-lysyl-[protein] + malonyl-CoA. Its pathway is lipid metabolism; malonyl-CoA biosynthesis; malonyl-CoA from acetyl-CoA: step 1/1. Its function is as follows. Component of the acetyl coenzyme A carboxylase (ACC) complex. Biotin carboxylase (BC) catalyzes the carboxylation of biotin on its carrier protein (BCCP) and then the CO(2) group is transferred by the transcarboxylase to acetyl-CoA to form malonyl-CoA. This is Acetyl-coenzyme A carboxylase carboxyl transferase subunit beta from Listeria monocytogenes serotype 4a (strain HCC23).